The chain runs to 585 residues: 2-succinyl-5-enolpyruvyl-6-hydroxy-3-cyclohexene-1-carboxylate synthase (585 aa).

This sequence belongs to the TPP enzyme family. MenD subfamily. In terms of assembly, homodimer. Mg(2+) is required as a cofactor. Requires Mn(2+) as cofactor. It depends on thiamine diphosphate as a cofactor.

It carries out the reaction isochorismate + 2-oxoglutarate + H(+) = 5-enolpyruvoyl-6-hydroxy-2-succinyl-cyclohex-3-ene-1-carboxylate + CO2. It functions in the pathway quinol/quinone metabolism; 1,4-dihydroxy-2-naphthoate biosynthesis; 1,4-dihydroxy-2-naphthoate from chorismate: step 2/7. Its pathway is cofactor biosynthesis; phylloquinone biosynthesis. Catalyzes the thiamine diphosphate-dependent decarboxylation of 2-oxoglutarate and the subsequent addition of the resulting succinic semialdehyde-thiamine pyrophosphate anion to isochorismate to yield 2-succinyl-5-enolpyruvyl-6-hydroxy-3-cyclohexene-1-carboxylate (SEPHCHC). The polypeptide is 2-succinyl-5-enolpyruvyl-6-hydroxy-3-cyclohexene-1-carboxylate synthase (Crocosphaera subtropica (strain ATCC 51142 / BH68) (Cyanothece sp. (strain ATCC 51142))).